The following is a 232-amino-acid chain: Ubiquinone biosynthesis O-methyltransferase (232 aa).

The S-adenosyl-L-methionine site is built by arginine 36, glycine 55, aspartate 76, and leucine 120.

The protein belongs to the methyltransferase superfamily. UbiG/COQ3 family.

The catalysed reaction is a 3-demethylubiquinol + S-adenosyl-L-methionine = a ubiquinol + S-adenosyl-L-homocysteine + H(+). It carries out the reaction a 3-(all-trans-polyprenyl)benzene-1,2-diol + S-adenosyl-L-methionine = a 2-methoxy-6-(all-trans-polyprenyl)phenol + S-adenosyl-L-homocysteine + H(+). Its pathway is cofactor biosynthesis; ubiquinone biosynthesis. Its function is as follows. O-methyltransferase that catalyzes the 2 O-methylation steps in the ubiquinone biosynthetic pathway. In Azotobacter vinelandii (strain DJ / ATCC BAA-1303), this protein is Ubiquinone biosynthesis O-methyltransferase.